We begin with the raw amino-acid sequence, 88 residues long: UPF0250 protein swp_3927 (88 aa).

It belongs to the UPF0250 family.

The polypeptide is UPF0250 protein swp_3927 (Shewanella piezotolerans (strain WP3 / JCM 13877)).